A 522-amino-acid chain; its full sequence is Cytochrome P450 714C2 (522 aa).

The Lumenal segment spans residues 1-11; it reads MELFSSQQWLA. A helical; Signal-anchor for type III membrane protein membrane pass occupies residues 12–32; it reads LLPPIILCILLFSYVYIILWL. Residues 33–522 are Cytoplasmic-facing; it reads RPERLRQKLR…KGVPLIFREL (490 aa). Cys470 contacts heme.

This sequence belongs to the cytochrome P450 family. The cofactor is heme.

It localises to the membrane. In terms of biological role, probably not involved in gibberellin metabolism since over-expression of CYP714C2 in a heterologous system does not induce semi-dwarfism. The chain is Cytochrome P450 714C2 (CYP714C2) from Oryza sativa subsp. japonica (Rice).